Consider the following 601-residue polypeptide: DNA ligase (601 aa).

D258 contacts ATP. The N6-AMP-lysine intermediate role is filled by K260. Residues R265, R280, E310, F350, R427, and K433 each contribute to the ATP site. The tract at residues 568–601 (DKSPEDATTTDEILEMYNKQPKKKIESPPIDESV) is disordered.

It belongs to the ATP-dependent DNA ligase family. The cofactor is Mg(2+).

It carries out the reaction ATP + (deoxyribonucleotide)n-3'-hydroxyl + 5'-phospho-(deoxyribonucleotide)m = (deoxyribonucleotide)n+m + AMP + diphosphate.. DNA ligase that seals nicks in double-stranded DNA during DNA replication, DNA recombination and DNA repair. The polypeptide is DNA ligase (Saccharolobus islandicus (strain L.S.2.15 / Lassen #1) (Sulfolobus islandicus)).